The following is a 1247-amino-acid chain: Protein jagged-2 (1247 aa).

The N-terminal stretch at 1-23 (MRARGWGRLPRRLLLLLVLCVQA) is a signal peptide. The Extracellular portion of the chain corresponds to 24–1082 (TRPMGYFELQ…ETVVMGGSST (1059 aa)). The N-linked (GlcNAc...) asparagine glycan is linked to N153. The DSL domain occupies 196 to 240 (VRCDENYYSATCNKFCRPRNDFFGHYTCDQYGNKACMDGWMGKEC). Intrachain disulfides connect C198-C207, C211-C223, C231-C240, C245-C256, C249-C262, C264-C273, C276-C287, C282-C293, C295-C304, C311-C323, C317-C333, C335-C344, C351-C362, C356-C371, C373-C382, C389-C400, C394-C409, C411-C420, C427-C438, C432-C447, C449-C458, C465-C475, C469-C484, C486-C495, C502-C513, C507-C522, C524-C533, C540-C551, C545-C560, C562-C571, C589-C612, C606-C622, C624-C633, C640-C651, C645-C660, C662-C671, C678-C689, C683-C698, C700-C709, C716-C727, C721-C736, and C738-C747. An EGF-like 1 domain is found at 241 to 274 (KEAVCKQGCNLLHGGCTVPGECRCSYGWQGKFCD). The EGF-like 2; atypical domain occupies 275-305 (ECVPYPGCVHGSCVEPWHCDCETNWGGLLCD). EGF-like domains are found at residues 307–345 (DLNY…KNCE) and 347–383 (AEHA…PTCA). One can recognise an EGF-like 5; calcium-binding domain in the interval 385 to 421 (DIDECASNPCAAGGTCVDQVDGFECICPEQWVGATCQ). The region spanning 423–459 (DANECEGKPCLNAFSCKNLIGGYYCDCLPGWKGINCQ) is the EGF-like 6; calcium-binding domain. The region spanning 461-496 (NINDCHGQCQHGGTCKDLVNGYQCVCPRGFGGRHCE) is the EGF-like 7; calcium-binding domain. EGF-like domains are found at residues 498–534 (EYDK…LHCE) and 536–572 (DMDL…KNCS). N570 is a glycosylation site (N-linked (GlcNAc...) asparagine). The EGF-like 10; atypical domain maps to 574-634 (PRDTCPGGAC…DSGFTGTYCH (61 aa)). N619 carries an N-linked (GlcNAc...) asparagine glycan. The EGF-like 11; calcium-binding domain maps to 636–672 (NIDDCMGQPCRNGGTCIDEVDSFRCFCPSGWEGELCD). One can recognise an EGF-like 12; calcium-binding domain in the interval 674–710 (NPNDCLPDPCHSRGRCYDLVNDFYCACDDGWKGKTCH). EGF-like domains lie at 712–748 (REFQ…STCT) and 751–787 (KNSS…RTCT). N752 carries an N-linked (GlcNAc...) asparagine glycan. Cystine bridges form between C755–C766, C760–C775, C777–C786, C793–C804, C798–C813, C815–C824, C831–C842, C836–C851, and C853–C862. An EGF-like 15; calcium-binding domain is found at 789–825 (NTNDCNPLPCYNGGICVDGVNWFRCECAPGFAGPDCR). In terms of domain architecture, EGF-like 16; calcium-binding spans 827–863 (NIDECQSSPCAYGATCVDEINGYRCSCPPGRSGPRCQ). The N-linked (GlcNAc...) asparagine glycan is linked to N1060. The chain crosses the membrane as a helical span at residues 1083-1103 (GLLVPVLCSVFSVLWLACVVI). Over 1104-1247 (CVWWTRKRRK…TKDVRRAGRE (144 aa)) the chain is Cytoplasmic. Composition is skewed to basic and acidic residues over residues 1115–1125 (RERSRLPRDES), 1192–1212 (LSRG…KFTK), and 1230–1247 (VDNR…AGRE). Disordered stretches follow at residues 1115-1148 (RERS…GSGL) and 1167-1247 (PRRA…AGRE). Position 1125 is a phosphoserine (S1125).

As to expression, found to be highest in fetal thymus, epidermis, foregut dorsal root ganglia and inner ear. In 2-weeK-old mice, abundant in heart, lung, thymus, skeletal muscle, brain and testis. Expression overlaps partially with Notch1 expression.

It localises to the membrane. In terms of biological role, putative Notch ligand involved in the mediation of Notch signaling. Plays an essential role during limb, craniofacial and thymic development. May be involved in myogenesis and in the development of peripheral and central nervous systems. This is Protein jagged-2 (Jag2) from Mus musculus (Mouse).